The chain runs to 154 residues: Myoglobin (154 aa).

The 147-residue stretch at 2–148 (GLSDGEWQLV…FRNDIAAKYK (147 aa)) folds into the Globin domain. A Phosphoserine modification is found at S4. H65 provides a ligand contact to nitrite. Residue H65 coordinates O2. Phosphothreonine is present on T68. H94 lines the heme b pocket.

This sequence belongs to the globin family. In terms of assembly, monomeric.

Its subcellular location is the cytoplasm. The protein localises to the sarcoplasm. It catalyses the reaction Fe(III)-heme b-[protein] + nitric oxide + H2O = Fe(II)-heme b-[protein] + nitrite + 2 H(+). It carries out the reaction H2O2 + AH2 = A + 2 H2O. Functionally, monomeric heme protein which primary function is to store oxygen and facilitate its diffusion within muscle tissues. Reversibly binds oxygen through a pentacoordinated heme iron and enables its timely and efficient release as needed during periods of heightened demand. Depending on the oxidative conditions of tissues and cells, and in addition to its ability to bind oxygen, it also has a nitrite reductase activity whereby it regulates the production of bioactive nitric oxide. Under stress conditions, like hypoxia and anoxia, it also protects cells against reactive oxygen species thanks to its pseudoperoxidase activity. The sequence is that of Myoglobin (MB) from Ctenodactylus gundi (Northern gundi).